Reading from the N-terminus, the 717-residue chain is SUN domain-containing protein 2 (717 aa).

The interval 1 to 66 (MSRRSQRLTR…PQLGPSSDAH (66 aa)) is disordered. Residues 1–139 (MSRRSQRLTR…SSSGYSSEDD (139 aa)) form an LMNA-binding region. Residues 1-212 (MSRRSQRLTR…LTRRFSSLKT (212 aa)) lie on the Nuclear side of the membrane. Position 12 is a phosphoserine (Ser12). A compositionally biased stretch (low complexity) spans 19–32 (SSSSGGSSVAGSQS). 2 positions are modified to phosphoserine: Ser38 and Ser54. Thr107 carries the post-translational modification Phosphothreonine. Residues Ser110, Ser113, Ser116, and Ser136 each carry the phosphoserine modification. Residues 213 to 233 (FLWFLLPLLLLTCLTYGAWYF) traverse the membrane as a helical segment. The Perinuclear space segment spans residues 234-717 (YPYGLQTFHP…RFRVHGEPAH (484 aa)). Coiled coils occupy residues 273 to 296 (EQRV…EFSS), 348 to 440 (RRET…EEVG), and 475 to 506 (LLQR…SARE). The sufficient for interaction with SYNE1 and SYNE2 stretch occupies residues 507 to 717 (AAASLSLTLQ…RFRVHGEPAH (211 aa)). An SUN domain is found at 555–716 (GASVISTRCS…YRFRVHGEPA (162 aa)). Cys601 and Cys705 are oxidised to a cystine. Asn636 carries N-linked (GlcNAc...) asparagine glycosylation.

As to quaternary structure, core component of the LINC complex which is composed of inner nuclear membrane SUN domain-containing proteins coupled to outer nuclear membrane KASH domain-containing nesprins. SUN and KASH domain-containing proteins seem to bind each other promiscuously; however, differentially expression of LINC complex constituents is giving rise to specific assemblies. At least SUN1/2-containing core LINC complexes are proposed to be hexameric composed of three protomers of each KASH and SUN domain-containing protein. Interacts with SYNE2; the SUN2:SYNE2/KASH2 LINC complex is a heterohexamer; the homotrimeric cloverleave-like conformation of the SUN domain is a prerequisite for LINC complex formation in which three separate SYNE2/KASH2 peptides bind at the interface of adjacent SUN domains. Component of a probable SUN2:KASH5 LINC complex. Interacts with SYNE1 and SYNE3; probably forming respective LINC complexes. Interacts with A-type lamin. Interaction with lamins B1 and C is hardly detectable. Interacts with EMD and RAB5A. Interacts with TMEM43. Interacts with TMEM201. In terms of processing, the disulfide bond with SYNE2 is required for stability of the SUN2:SYNE2/KASH2 LINC complex under tensile forces though not required for the interaction. The disulfide bond is proposed to be conserved in LINC complexes involved in force transmission. Widely expressed. Highly expressed in heart, lung and muscle. Weakly expressed in fetal heart. Slightly overexpressed in some heart tissues form patients with congenital heart defects.

The protein localises to the nucleus inner membrane. It is found in the nucleus envelope. Its subcellular location is the endosome membrane. In terms of biological role, as a component of the LINC (LInker of Nucleoskeleton and Cytoskeleton) complex, involved in the connection between the nuclear lamina and the cytoskeleton. The nucleocytoplasmic interactions established by the LINC complex play an important role in the transmission of mechanical forces across the nuclear envelope and in nuclear movement and positioning. Specifically, SYNE2 and SUN2 assemble in arrays of transmembrane actin-associated nuclear (TAN) lines which are bound to F-actin cables and couple the nucleus to retrograde actin flow during actin-dependent nuclear movement. Required for interkinetic nuclear migration (INM) and essential for nucleokinesis and centrosome-nucleus coupling during radial neuronal migration in the cerebral cortex and during glial migration. Required for nuclear migration in retinal photoreceptor progenitors implicating association with cytoplasmic dynein-dynactin and kinesin motor complexes, and probably B-type lamins; SUN1 and SUN2 seem to act redundantly. The SUN1/2:KASH5 LINC complex couples telomeres to microtubules during meiosis; SUN1 and SUN2 seem to act at least partial redundantly. Anchors chromosome movement in the prophase of meiosis and is involved in selective gene expression of coding and non-coding RNAs needed for gametogenesis. Required for telomere attachment to nuclear envelope and gametogenesis. May also function on endocytic vesicles as a receptor for RAB5-GDP and participate in the activation of RAB5. The protein is SUN domain-containing protein 2 of Homo sapiens (Human).